We begin with the raw amino-acid sequence, 258 residues long: Transcriptional repressor AccR (258 aa).

An HTH deoR-type domain is found at 6–61 (TQDRQAKIVELLRDEQFLAIGRLTEHFQISVATARRDLSELHEAGLLRRTHGGAVS). The segment at residues 23 to 42 (LAIGRLTEHFQISVATARRD) is a DNA-binding region (H-T-H motif).

Represses opine catabolism and conjugal transfer of the nopaline Ti plasmid pTiC58. In Agrobacterium fabrum (strain C58 / ATCC 33970) (Agrobacterium tumefaciens (strain C58)), this protein is Transcriptional repressor AccR (accR).